Reading from the N-terminus, the 136-residue chain is Ribonuclease YqgF (136 aa).

Belongs to the YqgF nuclease family. As to quaternary structure, monomer; also forms low amounts of dimers. Requires Mn(2+) as cofactor.

It localises to the cytoplasm. Functionally, has robust sequence-specific RNase activity, acting as a 5'-3' exo/endonuclease on ssRNA substrates with minimally 3 consecutive adenine bases. Has no detectable nuclease activity on dsRNA, dsDNA or Holliday junction DNA. The polypeptide is Ribonuclease YqgF (Deinococcus radiodurans (strain ATCC 13939 / DSM 20539 / JCM 16871 / CCUG 27074 / LMG 4051 / NBRC 15346 / NCIMB 9279 / VKM B-1422 / R1)).